The chain runs to 81 residues: MEKISAFFVILFLVSSCLVTMSVGDICQTDRDCVEIGIPRCKRTGKMPICYNGYCCCICSAKRLPASTTRKPPSPSTSKLV.

An N-terminal signal peptide occupies residues Met1–Gly24. 3 disulfide bridges follow: Cys27–Cys50, Cys33–Cys57, and Cys41–Cys59.

It belongs to the DEFL family.

The protein localises to the secreted. The sequence is that of Defensin-like protein 311 from Arabidopsis thaliana (Mouse-ear cress).